Here is a 444-residue protein sequence, read N- to C-terminus: MRLAQRYGIALVALLMVGATVLFFWSENIINYENIKFNSPVELVWWSRDMSWNYDVQRQCGIHTCRITNKRSRRPWARGVLFYGSNIKTGDFPLPRNEHQIWALLHEESPRNTPFVSNKEFLRHFHFTSTFSRYSNLPLTTMYLPSGEALTSKDYYVTFDGKSKYGYRPSTSVVFLQSDCDTMSGREDYVKELMKHLPIDSYGSCLRNRDLPESLQKDYLNNLYSPELLRFLSEYKFMIAIENAACPDYITEKFWRPLIMGVIPIYFGSPTIKDWEPNNKSAIFVNDFQNPQALVEYLNKLADNKKLYNSYRQHKLNRRNPISNKKLLHNLVTRQYHIGDSSPGASLFEKFECAVCYHVINTARNVKADLRHYNCPLEPVYAKMEGQKIPQNVADWRAAMEVGQCQAKVLDEFFRRDIGFNDAEFDAELNRRIEGNNCSNSSNT.

Residues 1-6 (MRLAQR) are Cytoplasmic-facing. Residues 7-27 (YGIALVALLMVGATVLFFWSE) traverse the membrane as a helical; Signal-anchor for type II membrane protein segment. At 28–444 (NIINYENIKF…GNNCSNSSNT (417 aa)) the chain is on the lumenal side. Residues Asn279, Asn437, and Asn440 are each glycosylated (N-linked (GlcNAc...) asparagine).

The protein belongs to the glycosyltransferase 10 family.

It localises to the golgi apparatus. Its subcellular location is the golgi stack membrane. Its pathway is protein modification; protein glycosylation. This Drosophila melanogaster (Fruit fly) protein is Alpha-(1,3)-fucosyltransferase B (FucTB).